The following is a 669-amino-acid chain: DNA ligase (669 aa).

NAD(+) contacts are provided by residues 32-36 (DAEYD), 81-82 (SL), and E111. K113 acts as the N6-AMP-lysine intermediate in catalysis. R134, E171, K290, and K314 together coordinate NAD(+). 4 residues coordinate Zn(2+): C408, C411, C426, and C432. The 79-residue stretch at 591 to 669 (EEALSLKGQT…EAELLAILGS (79 aa)) folds into the BRCT domain.

It belongs to the NAD-dependent DNA ligase family. LigA subfamily. Mg(2+) is required as a cofactor. Requires Mn(2+) as cofactor.

It catalyses the reaction NAD(+) + (deoxyribonucleotide)n-3'-hydroxyl + 5'-phospho-(deoxyribonucleotide)m = (deoxyribonucleotide)n+m + AMP + beta-nicotinamide D-nucleotide.. Its function is as follows. DNA ligase that catalyzes the formation of phosphodiester linkages between 5'-phosphoryl and 3'-hydroxyl groups in double-stranded DNA using NAD as a coenzyme and as the energy source for the reaction. It is essential for DNA replication and repair of damaged DNA. This is DNA ligase from Shewanella loihica (strain ATCC BAA-1088 / PV-4).